A 762-amino-acid chain; its full sequence is 5-methyltetrahydropteroyltriglutamate--homocysteine methyltransferase (762 aa).

5-methyltetrahydropteroyltri-L-glutamate is bound by residues 17–20 (REWK) and K111. L-homocysteine is bound by residues 435–437 (IGS) and E488. L-methionine-binding positions include 435-437 (IGS) and E488. 5-methyltetrahydropteroyltri-L-glutamate-binding positions include 519–520 (RC) and W565. D603 serves as a coordination point for L-homocysteine. Position 603 (D603) interacts with L-methionine. 5-methyltetrahydropteroyltri-L-glutamate is bound at residue E609. Zn(2+) is bound by residues H645, C647, and E669. H698 (proton donor) is an active-site residue. Residue C730 coordinates Zn(2+).

It belongs to the vitamin-B12 independent methionine synthase family. Zn(2+) is required as a cofactor.

It catalyses the reaction 5-methyltetrahydropteroyltri-L-glutamate + L-homocysteine = tetrahydropteroyltri-L-glutamate + L-methionine. Its pathway is amino-acid biosynthesis; L-methionine biosynthesis via de novo pathway; L-methionine from L-homocysteine (MetE route): step 1/1. Functionally, catalyzes the transfer of a methyl group from 5-methyltetrahydrofolate to homocysteine resulting in methionine formation. In Bacillus thuringiensis (strain Al Hakam), this protein is 5-methyltetrahydropteroyltriglutamate--homocysteine methyltransferase.